A 172-amino-acid polypeptide reads, in one-letter code: Pollen-specific protein-like At4g18596 (172 aa).

Positions 1 to 27 (MASKAIFFFFVSAVCLSSLAGVAIADA) are cleaved as a signal peptide. 3 cysteine pairs are disulfide-bonded: Cys41–Cys112, Cys44–Cys157, and Cys65–Cys100. An N-linked (GlcNAc...) asparagine glycan is attached at Asn70.

Belongs to the Ole e I family.

The protein resides in the secreted. This is Pollen-specific protein-like At4g18596 from Arabidopsis thaliana (Mouse-ear cress).